We begin with the raw amino-acid sequence, 387 residues long: ATP phosphoribosyltransferase regulatory subunit (387 aa).

Belongs to the class-II aminoacyl-tRNA synthetase family. HisZ subfamily. In terms of assembly, heteromultimer composed of HisG and HisZ subunits.

It is found in the cytoplasm. Its pathway is amino-acid biosynthesis; L-histidine biosynthesis; L-histidine from 5-phospho-alpha-D-ribose 1-diphosphate: step 1/9. Functionally, required for the first step of histidine biosynthesis. May allow the feedback regulation of ATP phosphoribosyltransferase activity by histidine. This is ATP phosphoribosyltransferase regulatory subunit from Psychrobacter cryohalolentis (strain ATCC BAA-1226 / DSM 17306 / VKM B-2378 / K5).